Consider the following 611-residue polypeptide: Methionine--tRNA ligase (611 aa).

The 'HIGH' region signature appears at 12–22 (PYANGPRHIGH). Positions 144, 147, 157, and 160 each coordinate Zn(2+). Positions 348 to 352 (KFSSS) match the 'KMSKS' region motif. Ser351 is an ATP binding site.

This sequence belongs to the class-I aminoacyl-tRNA synthetase family. MetG type 1 subfamily. As to quaternary structure, monomer. It depends on Zn(2+) as a cofactor.

It localises to the cytoplasm. The enzyme catalyses tRNA(Met) + L-methionine + ATP = L-methionyl-tRNA(Met) + AMP + diphosphate. Is required not only for elongation of protein synthesis but also for the initiation of all mRNA translation through initiator tRNA(fMet) aminoacylation. This Corynebacterium urealyticum (strain ATCC 43042 / DSM 7109) protein is Methionine--tRNA ligase.